A 194-amino-acid polypeptide reads, in one-letter code: MTENSTSTPAAKPKRAKASKKSTDHPKYSDMIVAAIQAEKNRAGSSRQSIQKYIKSHYKVGENADSQIKLSIKRLVTTGVLKQTKGVGASGSFRLAKSDEPKRSVAFKKTKKEVKKVATPKKAAKPKKAASKAPSKKPKATPVKKAKKKPAATPKKTKKPKTVKAKPVKASKPKKTKPVKPKAKSSAKRTGKKK.

M1 carries the post-translational modification N-acetylmethionine. Positions 1–11 are enriched in low complexity; it reads MTENSTSTPAA. The interval 1 to 29 is disordered; sequence MTENSTSTPAAKPKRAKASKKSTDHPKYS. T2 bears the N-acetylthreonine; in Histone H1.0, N-terminally processed mark. An H15 domain is found at 24-97; that stretch reads DHPKYSDMIV…GASGSFRLAK (74 aa). Citrulline is present on R42. Residues 83 to 194 form a disordered region; the sequence is QTKGVGASGS…SSAKRTGKKK (112 aa). S104 is subject to ADP-ribosylserine. The span at 105 to 194 shows a compositional bias: basic residues; it reads VAFKKTKKEV…SSAKRTGKKK (90 aa).

It belongs to the histone H1/H5 family. In terms of processing, ADP-ribosylated on Ser-104 in response to DNA damage.

The protein resides in the nucleus. The protein localises to the chromosome. Its function is as follows. Histones H1 are necessary for the condensation of nucleosome chains into higher-order structures. The histones H1.0 are found in cells that are in terminal stages of differentiation or that have low rates of cell division. The protein is Histone H1.0 (H1-0) of Bos taurus (Bovine).